Consider the following 471-residue polypeptide: Proline--tRNA ligase (471 aa).

It belongs to the class-II aminoacyl-tRNA synthetase family. ProS type 3 subfamily. Homodimer.

The protein resides in the cytoplasm. It catalyses the reaction tRNA(Pro) + L-proline + ATP = L-prolyl-tRNA(Pro) + AMP + diphosphate. Catalyzes the attachment of proline to tRNA(Pro) in a two-step reaction: proline is first activated by ATP to form Pro-AMP and then transferred to the acceptor end of tRNA(Pro). This chain is Proline--tRNA ligase, found in Archaeoglobus fulgidus (strain ATCC 49558 / DSM 4304 / JCM 9628 / NBRC 100126 / VC-16).